A 399-amino-acid chain; its full sequence is Acetylornithine aminotransferase (399 aa).

Residues Gly-97–Ala-98 and Phe-130 contribute to the pyridoxal 5'-phosphate site. N(2)-acetyl-L-ornithine is bound at residue Arg-133. Residue Asp-215 to Gln-218 participates in pyridoxal 5'-phosphate binding. Lys-244 is subject to N6-(pyridoxal phosphate)lysine. Thr-272 lines the N(2)-acetyl-L-ornithine pocket. Residue Thr-273 participates in pyridoxal 5'-phosphate binding.

Belongs to the class-III pyridoxal-phosphate-dependent aminotransferase family. ArgD subfamily. As to quaternary structure, homodimer. Pyridoxal 5'-phosphate serves as cofactor.

The protein localises to the cytoplasm. The catalysed reaction is N(2)-acetyl-L-ornithine + 2-oxoglutarate = N-acetyl-L-glutamate 5-semialdehyde + L-glutamate. It participates in amino-acid biosynthesis; L-arginine biosynthesis; N(2)-acetyl-L-ornithine from L-glutamate: step 4/4. This chain is Acetylornithine aminotransferase, found in Mesorhizobium japonicum (strain LMG 29417 / CECT 9101 / MAFF 303099) (Mesorhizobium loti (strain MAFF 303099)).